A 639-amino-acid polypeptide reads, in one-letter code: Exocyst complex component EXO70E2 (639 aa).

It belongs to the EXO70 family. As to quaternary structure, component of the exocyst complex and of the exocyst-positive organelle (EXPO). Interacts with SEC6, SEC10A and SEC10B. In terms of tissue distribution, expressed in roots, in the root-hair zone, both in root hair and nonhair cells.

It localises to the secreted. It is found in the extracellular exosome. The protein localises to the cell membrane. The protein resides in the cytoplasm. Its subcellular location is the endomembrane system. Influences the subcellular localization patterns of other exocyst complex proteins (e.g. SEC5A, SEC15A, SEC15B and EXO84B) leading to their recruitment to exocyst, well-defined large punctate structures throughout the cytosol. Essential component for the formation and the recruitment of exocyst subunits to the exocyst-positive organelle (EXPO), a secreted double membrane structure also called extracellular exosome, that acts as a sequester for cytosolic proteins to release them into the apoplast. This is Exocyst complex component EXO70E2 from Arabidopsis thaliana (Mouse-ear cress).